We begin with the raw amino-acid sequence, 251 residues long: HTH-type transcriptional regulator UlaR (251 aa).

One can recognise an HTH deoR-type domain in the interval 3 to 58 (EAQRHQILLDMLAQLGFVTVENVIERLGISPATARRDINKLDESGKLKKVRNGAEA). Residues 20–39 (VTVENVIERLGISPATARRD) constitute a DNA-binding region (H-T-H motif).

The protein localises to the cytoplasm. In terms of biological role, represses ulaG and the ulaABCDEF operon. The polypeptide is HTH-type transcriptional regulator UlaR (Salmonella agona (strain SL483)).